A 570-amino-acid polypeptide reads, in one-letter code: Mitoguardin 1 (570 aa).

The chain crosses the membrane as a helical span at residues glycine 34–cysteine 54.

The protein belongs to the mitoguardin family. As to quaternary structure, homodimer and heterodimer; forms heterodimers with miga2.

The protein resides in the mitochondrion outer membrane. Regulator of mitochondrial fusion: acts by forming homo- and heterodimers at the mitochondrial outer membrane and facilitating the formation of pld6/MitoPLD dimers. May act by regulating phospholipid metabolism via pld6/MitoPLD. The chain is Mitoguardin 1 from Xenopus laevis (African clawed frog).